Here is a 201-residue protein sequence, read N- to C-terminus: UPF0301 protein RHA1_ro03630 (201 aa).

This sequence belongs to the UPF0301 (AlgH) family.

The protein is UPF0301 protein RHA1_ro03630 of Rhodococcus jostii (strain RHA1).